Here is a 23-residue protein sequence, read N- to C-terminus: Acidic phospholipase A2 CHA-E6b (23 aa).

It belongs to the phospholipase A2 family. Group II subfamily. D49 sub-subfamily. It depends on Ca(2+) as a cofactor. Post-translationally, contains 7 disulfide bonds. Expressed by the venom gland.

It localises to the secreted. The catalysed reaction is a 1,2-diacyl-sn-glycero-3-phosphocholine + H2O = a 1-acyl-sn-glycero-3-phosphocholine + a fatty acid + H(+). Functionally, snake venom phospholipase A2 (PLA2) that shows high lipolytic (1200 umol/mg/min) and weak ADP-induced platelet aggregation activities. Also shows weak anticoagulant activity (IC(50) of about 1.0 uM). PLA2 catalyzes the calcium-dependent hydrolysis of the 2-acyl groups in 3-sn-phosphoglycerides. The protein is Acidic phospholipase A2 CHA-E6b of Crotalus horridus (Timber rattlesnake).